Here is a 662-residue protein sequence, read N- to C-terminus: 3',5'-cyclic-AMP phosphodiesterase, isoform F (662 aa).

2 disordered regions span residues 79-108 (VPAS…LSQG) and 207-245 (SAGQ…RLPT). A compositionally biased stretch (polar residues) spans 80–98 (PASNKSRRPNQSSSASRSG). The PDEase domain occupies 248–577 (VETPRENELG…DYYQSMIPPS (330 aa)). Catalysis depends on histidine 324, which acts as the Proton donor. 324–328 (HNSLH) provides a ligand contact to 3',5'-cyclic AMP. A divalent metal cation-binding residues include histidine 328, histidine 364, aspartate 365, and aspartate 482. Residues aspartate 365, aspartate 482, and glutamine 533 each contribute to the 3',5'-cyclic AMP site. Over residues 599–616 (EESDQENLAELEEGDESG) the composition is skewed to acidic residues. The segment at 599–662 (EESDQENLAE…CQNQPQHGGM (64 aa)) is disordered. Low complexity predominate over residues 617–634 (GESTTTGTTGTTAASALS). Over residues 635 to 646 (GAGGGGGGGGGM) the composition is skewed to gly residues. The span at 652 to 662 (GCQNQPQHGGM) shows a compositional bias: polar residues.

It belongs to the cyclic nucleotide phosphodiesterase family. PDE4 subfamily. As to quaternary structure, monomer. A divalent metal cation serves as cofactor.

The enzyme catalyses 3',5'-cyclic AMP + H2O = AMP + H(+). It functions in the pathway purine metabolism; 3',5'-cyclic AMP degradation; AMP from 3',5'-cyclic AMP: step 1/1. Its function is as follows. Hydrolyzes the second messenger cAMP, which is a key regulator of many important physiological processes. Vital for female fertility. Required for learning/memory. This chain is 3',5'-cyclic-AMP phosphodiesterase, isoform F, found in Drosophila melanogaster (Fruit fly).